Consider the following 36-residue polypeptide: Photosystem I reaction center subunit VIII (36 aa).

A helical membrane pass occupies residues 7–29; that stretch reads PSILVPLVGILLPAVTMASLFLY.

This sequence belongs to the PsaI family.

The protein localises to the plastid. It is found in the chloroplast thylakoid membrane. In terms of biological role, may help in the organization of the PsaL subunit. The sequence is that of Photosystem I reaction center subunit VIII from Adiantum capillus-veneris (Maidenhair fern).